Reading from the N-terminus, the 355-residue chain is NADH-quinone oxidoreductase subunit H (355 aa).

A run of 8 helical transmembrane segments spans residues Ile-25–Trp-45, Trp-91–Ile-111, Leu-126–Ala-146, Met-170–Val-190, Phe-205–Ile-225, Met-253–Ala-273, Phe-290–Trp-310, and Val-330–Leu-350.

Belongs to the complex I subunit 1 family. As to quaternary structure, NDH-1 is composed of 14 different subunits. Subunits NuoA, H, J, K, L, M, N constitute the membrane sector of the complex.

It localises to the cell inner membrane. The enzyme catalyses a quinone + NADH + 5 H(+)(in) = a quinol + NAD(+) + 4 H(+)(out). Functionally, NDH-1 shuttles electrons from NADH, via FMN and iron-sulfur (Fe-S) centers, to quinones in the respiratory chain. The immediate electron acceptor for the enzyme in this species is believed to be ubiquinone. Couples the redox reaction to proton translocation (for every two electrons transferred, four hydrogen ions are translocated across the cytoplasmic membrane), and thus conserves the redox energy in a proton gradient. This subunit may bind ubiquinone. The polypeptide is NADH-quinone oxidoreductase subunit H (Burkholderia ambifaria (strain MC40-6)).